The following is a 261-amino-acid chain: Cell division protein DivIB (261 aa).

At 1–27 (MEKGKVVVLEDRVPKLKERRRQKANRR) the chain is on the cytoplasmic side. The helical transmembrane segment at 28–48 (LIAYLSFFFLFILCVLYFQSP) threads the bilayer. The segment at 47–117 (SPLGAVGHVE…PNTIAIHVRE (71 aa)) is alpha. Residues 49 to 261 (LGAVGHVEVS…KEDGDETTSP (213 aa)) lie on the Extracellular side of the membrane. Residues 50-118 (GAVGHVEVSG…NTIAIHVREW (69 aa)) form the POTRA domain. The tract at residues 118-230 (WRRIAYVYDR…YPAIAAALDR (113 aa)) is beta. A gamma region spans residues 231–260 (NVKGVIHLEVGSYFVPYSPPKKEDGDETTS).

The protein belongs to the FtsQ/DivIB family. DivIB subfamily.

It localises to the cell membrane. Its function is as follows. Cell division protein that may be involved in stabilizing or promoting the assembly of the division complex. This chain is Cell division protein DivIB, found in Geobacillus kaustophilus (strain HTA426).